The primary structure comprises 448 residues: Protein EVI2B (448 aa).

The first 21 residues, 1–21 (MDPKYFILILFCGHLNNTFFS), serve as a signal peptide directing secretion. N-linked (GlcNAc...) asparagine glycans are attached at residues Asn-16 and Asn-50. Over 22-202 (KTETITTEKQ…QTPQKNNYNS (181 aa)) the chain is Extracellular. A disordered region spans residues 74–108 (AKVTAGQPTPAVYTSSEKPEAHTSAGQPLAYNTKQ). Over residues 97-108 (SAGQPLAYNTKQ) the composition is skewed to polar residues. N-linked (GlcNAc...) asparagine glycosylation is present at Asn-114. A helical transmembrane segment spans residues 203–226 (IAAILIGVLLTSMLVAIIIIVLWK). Topologically, residues 227–448 (CLRKPVLNDQ…SLPPPPAELL (222 aa)) are cytoplasmic. Thr-249 carries the phosphothreonine modification. Phosphoserine occurs at positions 268, 271, 278, and 294. Disordered stretches follow at residues 298–372 (IEDS…DSTS) and 427–448 (SIPP…AELL). 2 stretches are compositionally biased toward polar residues: residues 313-333 (VNGT…VSSS) and 350-372 (QESN…DSTS).

As to expression, bone marrow, peripheral blood mononuclear cells, fibroblasts and Epstein-Barr virus-transformed lymphoblastoid cell lines. Strongly expressed in granulocytic cells, and weakly on lymphocytes cells.

It is found in the membrane. Functionally, required for granulocyte differentiation and functionality of hematopoietic progenitor cells through the control of cell cycle progression and survival of hematopoietic progenitor cells. The protein is Protein EVI2B of Homo sapiens (Human).